The sequence spans 506 residues: Protein MGF 505-9R (506 aa).

3 ANK repeats span residues 54 to 83, 253 to 283, and 313 to 343; these read SIHKALQIAASEGNEDIVKLLILWNGNLKY, QVDTVLFQAVKYNHRKILAHFIHHVPREIVE, and FVKKLLHAVVKHKFMLIIKLLLERPKKKINL.

It belongs to the asfivirus MGF 505 family.

Functionally, plays a role in virus cell tropism, and may be required for efficient virus replication in macrophages. This African swine fever virus (isolate Tick/Malawi/Lil 20-1/1983) (ASFV) protein is Protein MGF 505-9R.